Here is a 198-residue protein sequence, read N- to C-terminus: dTTP/UTP pyrophosphatase (198 aa).

The Proton acceptor role is filled by Asp-75.

This sequence belongs to the Maf family. YhdE subfamily. Requires a divalent metal cation as cofactor.

It is found in the cytoplasm. The enzyme catalyses dTTP + H2O = dTMP + diphosphate + H(+). It catalyses the reaction UTP + H2O = UMP + diphosphate + H(+). Nucleoside triphosphate pyrophosphatase that hydrolyzes dTTP and UTP. May have a dual role in cell division arrest and in preventing the incorporation of modified nucleotides into cellular nucleic acids. This Wolbachia sp. subsp. Drosophila simulans (strain wRi) protein is dTTP/UTP pyrophosphatase.